The primary structure comprises 61 residues: Metallothionein-1L (61 aa).

Residues 1–29 (MDPNCSCATGGSCSCASSCKCKECKCTSC) form a beta region. 20 residues coordinate a divalent metal cation: Cys5, Cys7, Cys13, Cys15, Cys19, Cys21, Cys24, Cys26, Cys29, Cys33, Cys34, Cys36, Cys37, Cys41, Cys44, Cys48, Cys50, Cys57, Cys59, and Cys60. The segment at 30-61 (KKSCCSCCPMGCAKCAQGCVCKGASEKCSCCA) is alpha.

It belongs to the metallothionein superfamily. Type 1 family. In terms of assembly, monomer. In terms of tissue distribution, expressed in reticulocytes.

In terms of biological role, metallothioneins have a high content of cysteine residues that bind various heavy metals; these proteins are transcriptionally regulated by both heavy metals and glucocorticoids. The protein is Metallothionein-1L (MT1L) of Homo sapiens (Human).